The following is a 491-amino-acid chain: Glutamyl-tRNA(Gln) amidotransferase subunit A (491 aa).

Catalysis depends on charge relay system residues Lys80 and Ser155. Catalysis depends on Ser179, which acts as the Acyl-ester intermediate.

This sequence belongs to the amidase family. GatA subfamily. In terms of assembly, heterotrimer of A, B and C subunits.

The enzyme catalyses L-glutamyl-tRNA(Gln) + L-glutamine + ATP + H2O = L-glutaminyl-tRNA(Gln) + L-glutamate + ADP + phosphate + H(+). In terms of biological role, allows the formation of correctly charged Gln-tRNA(Gln) through the transamidation of misacylated Glu-tRNA(Gln) in organisms which lack glutaminyl-tRNA synthetase. The reaction takes place in the presence of glutamine and ATP through an activated gamma-phospho-Glu-tRNA(Gln). The chain is Glutamyl-tRNA(Gln) amidotransferase subunit A from Salinispora tropica (strain ATCC BAA-916 / DSM 44818 / JCM 13857 / NBRC 105044 / CNB-440).